A 79-amino-acid chain; its full sequence is Small ribosomal subunit protein uS17 (79 aa).

The protein belongs to the universal ribosomal protein uS17 family. Part of the 30S ribosomal subunit.

Its function is as follows. One of the primary rRNA binding proteins, it binds specifically to the 5'-end of 16S ribosomal RNA. This is Small ribosomal subunit protein uS17 from Orientia tsutsugamushi (strain Boryong) (Rickettsia tsutsugamushi).